The primary structure comprises 452 residues: Protein disulfide-isomerase TMX3 (452 aa).

An N-terminal signal peptide occupies residues 1–26 (MAAAGLCFILAIVSSTSLLASVPVSA). The Thioredoxin domain occupies 27–128 (LVEDLDDSFK…KEDIVEFANR (102 aa)). Over 27–375 (LVEDLDDSFK…TVVSVFKSSP (349 aa)) the chain is Lumenal. Catalysis depends on nucleophile residues C53 and C56. Cysteines 53 and 56 form a disulfide. N-linked (GlcNAc...) asparagine glycosylation is found at N258 and N313. Residues 376–396 (LLGCFLFGLPLGVISIMCYGI) form a helical membrane-spanning segment. The Cytoplasmic portion of the chain corresponds to 397–452 (CTADTEDGSEEMTRKDVIDQNASDEGSDEEEEKGREITDVSDEDQQEKDFMEKKID). A disordered region spans residues 405–452 (SEEMTRKDVIDQNASDEGSDEEEEKGREITDVSDEDQQEKDFMEKKID). Positions 443-452 (EKDFMEKKID) are enriched in basic and acidic residues. Residues 449 to 452 (KKID) carry the Di-lysine motif motif.

The protein belongs to the protein disulfide isomerase family.

Its subcellular location is the endoplasmic reticulum membrane. The enzyme catalyses Catalyzes the rearrangement of -S-S- bonds in proteins.. In terms of biological role, probable disulfide isomerase, which participates in the folding of proteins containing disulfide bonds. May act as a dithiol oxidase. Acts as a regulator of endoplasmic reticulum-mitochondria contact sites via its ability to regulate redox signals. The protein is Protein disulfide-isomerase TMX3 (tmx3) of Xenopus laevis (African clawed frog).